The sequence spans 191 residues: uncharacterized protein (191 aa).

This is an uncharacterized protein from Acanthamoeba polyphaga (Amoeba).